A 338-amino-acid chain; its full sequence is Homocysteine S-methyltransferase 3 (338 aa).

Positions 12–326 (AVRRWVDAAG…NTIRAIHRTL (315 aa)) constitute a Hcy-binding domain. Positions 244, 311, and 312 each coordinate Zn(2+).

As to quaternary structure, monomer. It depends on Zn(2+) as a cofactor.

It carries out the reaction S-methyl-L-methionine + L-homocysteine = 2 L-methionine + H(+). Its function is as follows. Catalyzes methyl transfer from S-methylmethionine (SMM) to adenosyl-L-homocysteine (AdoMet). SMM degradation (by HMT-1, HMT-2, HMT-3 and HMT-4) and biosynthesis (by MMT1) constitute the SMM cycle in plants, which is probably required to achieve short term control of AdoMet level. This is Homocysteine S-methyltransferase 3 (HMT-3) from Zea mays (Maize).